The chain runs to 464 residues: Sushi repeat-containing protein SRPX (464 aa).

Positions 1–28 (MGSPGLRPTLLLPQVLLLLLALLHVPPS) are cleaved as a signal peptide. Residue Ser34 is glycosylated (O-linked (Xyl...) (chondroitin sulfate) serine). 5 disulfide bridges follow: Cys57–Cys85, Cys69–Cys103, Cys89–Cys115, Cys120–Cys161, and Cys147–Cys174. 2 consecutive Sushi domains span residues 57-117 (CSPI…ICKQ) and 118-176 (KRCP…SCVD). Residues 177–259 (MEPPRIKCPS…TCKFRVKVRV (83 aa)) enclose the HYR domain. The Sushi 3 domain maps to 260–319 (RRCGKLNAPENGYMKCSSDGDNYGATCEFSCIGGYELQGSPARVCQSNLAWSGTEPSCAA). Disulfide bonds link Cys262–Cys304 and Cys290–Cys317.

Normal cells and cells transformed by human papillomavirus type 16 E6E7 and polyomavirus large T. Suppressed in cells transformed by oncogenes such as V-SRC, V-ABL, V-FPS, V-MOS, V-SIS, V-K-RAS, and polyomavirus middle T.

This is Sushi repeat-containing protein SRPX (Srpx) from Rattus norvegicus (Rat).